The following is a 413-amino-acid chain: Putative F-box protein At3g23970 (413 aa).

Residues 1–42 (MNIPPELTFEVLVRLPLKSLARFRSVRKEWKLVIDSEFFRDC) enclose the F-box domain.

The chain is Putative F-box protein At3g23970 from Arabidopsis thaliana (Mouse-ear cress).